Consider the following 456-residue polypeptide: MITDQNSKPQQGELPTTHIDALTNSFSQFLRIEATSGAVLLLATVVALTLSNSPWSDGFRSLWETPIGIQIGAFQFLRSLRDLINDGLMTLFFFIVALEIKREVVLGELRNPRMVALSVVAAAGGMLVPMGLYLALQHGQPGQHGWGVVMPTDTAFVIGCLALLGSRVPPGLRVFLLSLAVVDDLAAILVVAVGYSRSIDWTALALGAVGLVIIRGMALLGVRNIRVYFLAGAIIWLAVNASGIHATIVGVILGLMTPTAGWVSDQRLGEILRKVLSYPPGDHWSGDTEDNRALQVAGIAVRETLSPVERLEAMLHPWVAFGVMPLFALANAGVPITIKGLINPVSLAVMAGFVLGKPIGVTAFAWLGVRTGVAIRPAGLTWGGLVGGALLTGIGFTMALFIAGQAFQDATLNAAKLGILAASVVSSVAGLTLLCALPRSDGTPMFRGRRGGGEHP.

Helical transmembrane passes span Ile-32–Asn-52, Gly-87–Gly-107, Met-114–Leu-134, Gly-145–Gly-165, Val-174–Gly-194, Thr-202–Val-222, Ala-233–Leu-253, Trp-318–Ile-338, Leu-347–Leu-367, Trp-382–Ile-402, and Leu-417–Leu-437.

It belongs to the NhaA Na(+)/H(+) (TC 2.A.33) antiporter family.

It is found in the cell inner membrane. The catalysed reaction is Na(+)(in) + 2 H(+)(out) = Na(+)(out) + 2 H(+)(in). In terms of biological role, na(+)/H(+) antiporter that extrudes sodium in exchange for external protons. The chain is Na(+)/H(+) antiporter NhaA 3 from Acidiphilium cryptum (strain JF-5).